Reading from the N-terminus, the 731-residue chain is MTPASANDLLIPEEDLNRLRHCHHHNPHGFYGWHATDDGSVIRTRQIGAEKVELVLGDTQIVMNPIGDDIFAIKLGNREAFDYRLRVTWPGQDPVVTADPYIFLPTLGEMDTYLISEGRHERLWDVLGANVKTYETTLGQVRGTAFAVWAPNAIGVAVIGGFNGWNASQHAMRSLGGSGIWELFIPNIGPGEVYKFAIQTREGHRRDKADPMARLAELPPATGSIVVESDYQWQDSEWMDKRAEIDTATTPMSVYEVHLGSWRWGRSYAELATELVDYVADLGYTHVEFMPVAEHPFGGSWGYQVSGYYAPTSRWGSPDELRKLIDAFHARGIGVIIDWVPAHFPKDDWALARFDGQALYEHPDWRRGEQKDWGTYVFNFGRSEVRNFLVANALYWLEEFHVDGLRVDAVASMLYLDYSREHGEWEPNVYGGRENLEAVQFLQEMNATVQRVHPGALTIAEESTSWPGVTAPTWDGGLGFSLKWNMGWMNDTLEYFSKDPIHRSFHHNELTFSLVYAFSERFVLPISHDEVVHGKGSLWNRMPGDTWNKAAGMRTLLAYMWAHPGKKLLFMGQEIGQRDEWSEAHELPWGVVEGWQGEYHEGISDLVRELNSTYKEVTALHQRDFSGEGFTWNKADDASNNILVFTRHGDDGSQALCVFNLSGTSQPEYQIGVSGGGSWRLVLNTDDEQYHGANNPLPETIEAEKIDRDGFPYTTTLHSPAMSAQFYVWEG.

Aspartate 408 serves as the catalytic Nucleophile. Glutamate 461 functions as the Proton donor in the catalytic mechanism.

The protein belongs to the glycosyl hydrolase 13 family. GlgB subfamily. Monomer.

The enzyme catalyses Transfers a segment of a (1-&gt;4)-alpha-D-glucan chain to a primary hydroxy group in a similar glucan chain.. It participates in glycan biosynthesis; glycogen biosynthesis. Functionally, catalyzes the formation of the alpha-1,6-glucosidic linkages in glycogen by scission of a 1,4-alpha-linked oligosaccharide from growing alpha-1,4-glucan chains and the subsequent attachment of the oligosaccharide to the alpha-1,6 position. This Corynebacterium efficiens (strain DSM 44549 / YS-314 / AJ 12310 / JCM 11189 / NBRC 100395) protein is 1,4-alpha-glucan branching enzyme GlgB.